The chain runs to 130 residues: Small ribosomal subunit protein uS17m (130 aa).

Residues 1 to 20 constitute a mitochondrion transit peptide; it reads MSVVRSSVHARWIVGKVIGT.

Belongs to the universal ribosomal protein uS17 family. In terms of assembly, component of the mitochondrial small ribosomal subunit (mt-SSU). Mature mammalian 55S mitochondrial ribosomes consist of a small (28S) and a large (39S) subunit. The 28S small subunit contains a 12S ribosomal RNA (12S mt-rRNA) and 30 different proteins. The 39S large subunit contains a 16S rRNA (16S mt-rRNA), a copy of mitochondrial valine transfer RNA (mt-tRNA(Val)), which plays an integral structural role, and 52 different proteins.

It is found in the mitochondrion. The chain is Small ribosomal subunit protein uS17m (MRPS17) from Homo sapiens (Human).